Consider the following 323-residue polypeptide: MDARRKHWKENKFAPLFSAQDIPNEAAQLESSSEQMPLDKVKRMEIIFNLSSRKFREENKFKRKEFISQPNENEQESNLIERKINISKTEADTNSVSCESSNLDIATEESFNSTEELPTWVIKELSTPPQKDKKKKFTEGMSSKLRLNLLNEELEVLDMKCKKIEEEFESAEKELLNSKKEVSTKPLNFQEAEVETSKTDWELQALRNDLSEKATNVKNLTEELQQAKEVIHKLSLENKDLKETVRKLKRQTEVGNAFLKEEMKLYYELEMEKIRGELTAIKNELRTEKSLQARNNRALELLRKHFASVMPSGTSDNFMGDFF.

Positions 143 to 290 (SKLRLNLLNE…IKNELRTEKS (148 aa)) form a coiled coil.

It belongs to the CCDC160 family.

The sequence is that of Coiled-coil domain-containing protein 160 (CCDC160) from Bos taurus (Bovine).